A 72-amino-acid chain; its full sequence is uncharacterized protein (72 aa).

The stretch at 27–55 (YTQNLINELQEARDSINDLQRAHERLKLV) forms a coiled coil.

This is an uncharacterized protein from Schizosaccharomyces pombe (strain 972 / ATCC 24843) (Fission yeast).